Reading from the N-terminus, the 169-residue chain is Probable calcium-binding protein CML20 (169 aa).

Residues 1–23 form a disordered region; that stretch reads MSSIYRTVSRKEKPRRHHGLTTQ. EF-hand domains lie at 23–58, 59–94, 96–131, and 132–167; these read QKKQEIKEAFELFDTDGSGTIDAKELNVAMRALGFE, MTEEQINKMIADVDKDGSGAIDFDEFVHMMTAKIGE, DTKEELTKAFQIIDLDKNGKISPDDIKRMAKDLGEN, and FTDAEIREMVEEADRDRDGEVNMDEFMRMMRRTAYG. Ca(2+)-binding residues include Asp36, Asp38, Ser40, Thr42, Glu47, Asp72, Asp74, Ser76, Glu83, Asp109, Asp111, Asn113, Lys115, Asp120, Asp145, Asp147, Asp149, Glu151, and Glu156.

In terms of assembly, interacts with TON1A and TON1B. Interacts with SAC3A and SAC3B. Interacts with UCH1 and UCH2.

Functionally, potential calcium sensor. The chain is Probable calcium-binding protein CML20 from Arabidopsis thaliana (Mouse-ear cress).